Here is a 552-residue protein sequence, read N- to C-terminus: Lysine--tRNA ligase (552 aa).

The short motif at 71 to 79 is the 'HIGH' region element; the sequence is PSGLPHLGT. The 'KMSKS' region signature appears at 319 to 323; the sequence is KISKS. Lysine 322 contacts ATP.

It belongs to the class-I aminoacyl-tRNA synthetase family.

It localises to the cytoplasm. It carries out the reaction tRNA(Lys) + L-lysine + ATP = L-lysyl-tRNA(Lys) + AMP + diphosphate. This is Lysine--tRNA ligase from Caulobacter sp. (strain K31).